The primary structure comprises 88 residues: Sm-like protein LSM5 (88 aa).

Ala2 bears the N-acetylalanine mark. A Sm domain is found at Leu9–Pro84.

This sequence belongs to the snRNP Sm proteins family. Component of the heptameric LSM1-LSM7 complex that forms a seven-membered ring structure with a donut shape. The LSM subunits are arranged in the order LSM1, LSM2, LSM3, LSM6, LSM5, LSM7 and LSM4. Component of the heptameric LSM2-LSM8 complex that forms a seven-membered ring structure with a donut shape. The LSM subunits are arranged in the order LSM8, LSM2, LSM3, LSM6, LSM5, LSM7 and LSM4. LSM2 subunit interacts only with its two neighboring subunits, LSM6A or LSM6B and LSM7. As to expression, expressed in roots, leaves, stems, flowers and siliques.

The protein resides in the cytoplasm. Its subcellular location is the nucleus. Its function is as follows. Component of LSM protein complexes, which are involved in RNA processing. Component of the cytoplasmic LSM1-LSM7 complex which is involved in mRNA degradation by promoting decapping and leading to accurate 5'-3' mRNA decay. The cytoplasmic LSM1-LSM7 complex regulates developmental gene expression by the decapping of specific development-related transcripts. Component of the nuclear LSM2-LSM8 complex which is involved splicing nuclear mRNAs. LSM2-LSM8 binds directly to the U6 small nuclear RNAs (snRNAs) and is essential for accurate splicing of selected development-related mRNAs through the stabilization of the spliceosomal U6 snRNA. Plays a critical role in the regulation of development-related gene expression. Involved in the control of plant sensitivity to abscisic acid (ABA) and drought. Functions with ABH1 as negative regulator of ABA signaling in guard cells. Required for regulation of splicing efficiency of many stress-responsive genes under stress conditions. The polypeptide is Sm-like protein LSM5 (Arabidopsis thaliana (Mouse-ear cress)).